A 441-amino-acid polypeptide reads, in one-letter code: Ribosomal protein uS12 methylthiotransferase RimO (441 aa).

The 111-residue stretch at 8–118 (PKIGFVSLGC…VLEHVHHYVP (111 aa)) folds into the MTTase N-terminal domain. Positions 17, 53, 82, 150, 154, and 157 each coordinate [4Fe-4S] cluster. In terms of domain architecture, Radical SAM core spans 136-373 (LTPRHYAYLK…MQLQQQISAE (238 aa)). A TRAM domain is found at 376-441 (QEKVGREILV…DEYDLWGSRV (66 aa)).

Belongs to the methylthiotransferase family. RimO subfamily. [4Fe-4S] cluster is required as a cofactor.

The protein localises to the cytoplasm. The enzyme catalyses L-aspartate(89)-[ribosomal protein uS12]-hydrogen + (sulfur carrier)-SH + AH2 + 2 S-adenosyl-L-methionine = 3-methylsulfanyl-L-aspartate(89)-[ribosomal protein uS12]-hydrogen + (sulfur carrier)-H + 5'-deoxyadenosine + L-methionine + A + S-adenosyl-L-homocysteine + 2 H(+). In terms of biological role, catalyzes the methylthiolation of an aspartic acid residue of ribosomal protein uS12. The sequence is that of Ribosomal protein uS12 methylthiotransferase RimO from Escherichia coli (strain SMS-3-5 / SECEC).